A 468-amino-acid chain; its full sequence is uncharacterized protein (468 aa).

In terms of domain architecture, HTH gntR-type spans 1–69; the sequence is MKKYQQLAEQ…PQSGYYVAPQ (69 aa). Lys312 bears the N6-(pyridoxal phosphate)lysine mark.

In the C-terminal section; belongs to the class-I pyridoxal-phosphate-dependent aminotransferase family.

This is an uncharacterized protein from Escherichia coli (strain K12).